The primary structure comprises 1068 residues: Phosphatidylinositol 4,5-bisphosphate 3-kinase catalytic subunit alpha isoform (1068 aa).

The PI3K-ABD domain maps to 16–105 (MPPRILVECL…QPFLKVIEPV (90 aa)). In terms of domain architecture, PI3K-RBD spans 187–289 (KGQIIVVIWV…GRMPNLMLMA (103 aa)). The 158-residue stretch at 330-487 (INSALRIKIL…DWFSSVVKFP (158 aa)) folds into the C2 PI3K-type domain. In terms of domain architecture, PIK helical spans 517–694 (LARDNELREN…GLLLESYCRA (178 aa)). A PI3K/PI4K catalytic domain is found at 765-1051 (RLEECRIMSS…QMNDAHHGGW (287 aa)). The segment at 771–777 (IMSSAKR) is G-loop. Positions 912-920 (GIGDRHNSN) are catalytic loop. The segment at 931 to 957 (HIDFGHFLDHKKKKFGYKRERVPFVLT) is activation loop.

This sequence belongs to the PI3/PI4-kinase family. As to quaternary structure, heterodimer of a catalytic subunit PIK3CA and a p85 regulatory subunit (PIK3R1, PIK3R2 or PIK3R3). Interacts with IRS1 in nuclear extracts. Interacts with RUFY3. Interacts with RASD2. Interacts with APPL1. Interacts with HRAS and KRAS. Interaction with HRAS/KRAS is required for PI3K pathway signaling and cell proliferation stimulated by EGF and FGF2. Interacts with FAM83B; activates the PI3K/AKT signaling cascade.

It carries out the reaction a 1,2-diacyl-sn-glycero-3-phospho-(1D-myo-inositol-4,5-bisphosphate) + ATP = a 1,2-diacyl-sn-glycero-3-phospho-(1D-myo-inositol-3,4,5-trisphosphate) + ADP + H(+). The enzyme catalyses a 1,2-diacyl-sn-glycero-3-phospho-(1D-myo-inositol) + ATP = a 1,2-diacyl-sn-glycero-3-phospho-(1D-myo-inositol-3-phosphate) + ADP + H(+). It catalyses the reaction L-seryl-[protein] + ATP = O-phospho-L-seryl-[protein] + ADP + H(+). The catalysed reaction is 1,2-dioctanoyl-sn-glycero-3-phospho-(1D-myo-inositol-4,5-bisphosphate) + ATP = 1,2-dioctanoyl-sn-glycero-3-phospho-(1D-myo-inositol-3,4,5-trisphosphate) + ADP + H(+). It carries out the reaction 1-octadecanoyl-2-(5Z,8Z,11Z,14Z)-eicosatetraenoyl-sn-glycero-3-phospho-1D-myo-inositol 4,5-bisphosphate + ATP = 1-octadecanoyl-2-(5Z,8Z,11Z,14Z-eicosatetraenoyl)-sn-glycero-3-phospho-(1D-myo-inositol 3,4,5-triphosphate) + ADP + H(+). It functions in the pathway phospholipid metabolism; phosphatidylinositol phosphate biosynthesis. Its function is as follows. Phosphoinositide-3-kinase (PI3K) phosphorylates phosphatidylinositol (PI) and its phosphorylated derivatives at position 3 of the inositol ring to produce 3-phosphoinositides. Uses ATP and PtdIns(4,5)P2 (phosphatidylinositol 4,5-bisphosphate) to generate phosphatidylinositol 3,4,5-trisphosphate (PIP3). PIP3 plays a key role by recruiting PH domain-containing proteins to the membrane, including AKT1 and PDPK1, activating signaling cascades involved in cell growth, survival, proliferation, motility and morphology. Participates in cellular signaling in response to various growth factors. Involved in the activation of AKT1 upon stimulation by receptor tyrosine kinases ligands such as EGF, insulin, IGF1, VEGFA and PDGF. Involved in signaling via insulin-receptor substrate (IRS) proteins. Essential in endothelial cell migration during vascular development through VEGFA signaling, possibly by regulating RhoA activity. Required for lymphatic vasculature development, possibly by binding to RAS and by activation by EGF and FGF2, but not by PDGF. Regulates invadopodia formation through the PDPK1-AKT1 pathway. Participates in cardiomyogenesis in embryonic stem cells through a AKT1 pathway. Participates in vasculogenesis in embryonic stem cells through PDK1 and protein kinase C pathway. Also has serine-protein kinase activity: phosphorylates PIK3R1 (p85alpha regulatory subunit), EIF4EBP1 and HRAS. Plays a role in the positive regulation of phagocytosis and pinocytosis. In Mus musculus (Mouse), this protein is Phosphatidylinositol 4,5-bisphosphate 3-kinase catalytic subunit alpha isoform (Pik3ca).